We begin with the raw amino-acid sequence, 229 residues long: GTP cyclohydrolase 1 (229 aa).

Residues 1–21 (MTLAKPGSGSQSRMDDKAHFK) are disordered. Positions 116, 119, and 187 each coordinate Zn(2+).

The protein belongs to the GTP cyclohydrolase I family. Toroid-shaped homodecamer, composed of two pentamers of five dimers.

It catalyses the reaction GTP + H2O = 7,8-dihydroneopterin 3'-triphosphate + formate + H(+). The protein operates within cofactor biosynthesis; 7,8-dihydroneopterin triphosphate biosynthesis; 7,8-dihydroneopterin triphosphate from GTP: step 1/1. The protein is GTP cyclohydrolase 1 of Synechococcus sp. (strain JA-2-3B'a(2-13)) (Cyanobacteria bacterium Yellowstone B-Prime).